The sequence spans 535 residues: Serine/threonine-protein kinase C (535 aa).

Residues 12–277 (YRIIETLGRG…AMAQTLQGNF (266 aa)) enclose the Protein kinase domain. Residues 18-26 (LGRGGFGET) and Lys-43 each bind ATP. Catalysis depends on Asp-142, which acts as the Proton acceptor. Residues 371–535 (NNPPPAVEEP…GEKPIDPEQN (165 aa)) are disordered. The segment covering 402 to 421 (SPIPTPATPSPEPTPSPSPS) has biased composition (pro residues). Residues 422 to 435 (PETTSSPTEDTITP) show a composition bias toward low complexity. 2 stretches are compositionally biased toward pro residues: residues 446–464 (APIP…PQPS) and 472–498 (TPAP…PTPQ).

It belongs to the protein kinase superfamily. Ser/Thr protein kinase family.

It carries out the reaction L-seryl-[protein] + ATP = O-phospho-L-seryl-[protein] + ADP + H(+). The enzyme catalyses L-threonyl-[protein] + ATP = O-phospho-L-threonyl-[protein] + ADP + H(+). This Synechocystis sp. (strain ATCC 27184 / PCC 6803 / Kazusa) protein is Serine/threonine-protein kinase C (spkC).